Here is a 352-residue protein sequence, read N- to C-terminus: N-lysine methyltransferase KMT5A (352 aa).

The segment at 21–51 (AVAATAPGPEMVERRGPGRPRTNGENVFTGQ) is disordered. Position 59 is a phosphoserine (serine 59). The interval 87 to 202 (PLAGIYRKRD…KSKAELQSEE (116 aa)) is disordered. Basic and acidic residues predominate over residues 109–121 (MKAEEQKIKDARR). Threonine 140 is modified (phosphothreonine). The span at 156-172 (GLKKPVRGKQAPRKKAQ) shows a compositional bias: basic residues. In terms of domain architecture, SET spans 216 to 337 (EGMKIDLIDG…AGEELLYDYG (122 aa)). Residues 226–228 (KGR), tyrosine 271, and 298–299 (NH) each bind S-adenosyl-L-methionine.

This sequence belongs to the class V-like SAM-binding methyltransferase superfamily. Histone-lysine methyltransferase family. PR/SET subfamily. As to quaternary structure, interacts with L3MBTL1. Interacts with SIRT2 (phosphorylated form); the interaction is direct, stimulates KMT5A-mediated methyltransferase activity at histone H4 'Lys-20' (H4K20me1) and is increased in a H(2)O(2)-induced oxidative stress-dependent manner. Post-translationally, ubiquitinated and degraded by the DCX(DTL) complex.

It is found in the nucleus. The protein resides in the chromosome. It catalyses the reaction L-lysyl(20)-[histone H4] + S-adenosyl-L-methionine = N(6)-methyl-L-lysyl(20)-[histone H4] + S-adenosyl-L-homocysteine + H(+). The catalysed reaction is L-lysyl-[protein] + S-adenosyl-L-methionine = N(6)-methyl-L-lysyl-[protein] + S-adenosyl-L-homocysteine + H(+). In terms of biological role, protein-lysine N-methyltransferase that monomethylates both histones and non-histone proteins. Specifically monomethylates 'Lys-20' of histone H4 (H4K20me1). H4K20me1 is enriched during mitosis and represents a specific tag for epigenetic transcriptional repression. Mainly functions in euchromatin regions, thereby playing a central role in the silencing of euchromatic genes. Required for cell proliferation, probably by contributing to the maintenance of proper higher-order structure of DNA during mitosis. Involved in chromosome condensation and proper cytokinesis. Nucleosomes are preferred as substrate compared to free histones. Mediates monomethylation of p53/TP53 at 'Lys-382', leading to repress p53/TP53-target genes. Plays a negative role in TGF-beta response regulation and a positive role in cell migration. The protein is N-lysine methyltransferase KMT5A of Bos taurus (Bovine).